The primary structure comprises 531 residues: Nuclear RNA export factor 3 (531 aa).

Disordered stretches follow at residues 33-59 (RSEP…HGAH) and 83-106 (QDQT…GNMP). The segment covering 41–50 (MHSSSHQQQD) has biased composition (polar residues). Basic and acidic residues predominate over residues 83–102 (QDQTHVNMEREQKPPERRME). The RRM domain occupies 113-192 (WFKITVPFGI…IFVNPAGIPH (80 aa)). Residues 344–494 (LVLQFLQQYY…LCIVNDKLFV (151 aa)) enclose the NTF2 domain.

It belongs to the NXF family. In terms of assembly, interacts with NXT1, NXT2, E1B-AP5 and CRM1 nuclear export factor. In terms of tissue distribution, expressed at high level in testis and at low level in a small number of tissues.

The protein localises to the nucleus. It localises to the cytoplasm. May function as a tissue-specific nuclear mRNA export factor. The protein is Nuclear RNA export factor 3 (NXF3) of Homo sapiens (Human).